A 267-amino-acid polypeptide reads, in one-letter code: Shikimate dehydrogenase (NADP(+)) (267 aa).

Shikimate is bound by residues 14-16 (SLS) and Thr61. The Proton acceptor role is filled by Lys65. 2 residues coordinate shikimate: Asn86 and Asp101. NADP(+)-binding positions include 126–130 (GAGGA), 150–155 (NRTHSK), and Leu213. Tyr215 contacts shikimate. Gly236 is a binding site for NADP(+).

It belongs to the shikimate dehydrogenase family. In terms of assembly, homodimer.

The enzyme catalyses shikimate + NADP(+) = 3-dehydroshikimate + NADPH + H(+). It participates in metabolic intermediate biosynthesis; chorismate biosynthesis; chorismate from D-erythrose 4-phosphate and phosphoenolpyruvate: step 4/7. Its function is as follows. Involved in the biosynthesis of the chorismate, which leads to the biosynthesis of aromatic amino acids. Catalyzes the reversible NADPH linked reduction of 3-dehydroshikimate (DHSA) to yield shikimate (SA). In Vesicomyosocius okutanii subsp. Calyptogena okutanii (strain HA), this protein is Shikimate dehydrogenase (NADP(+)).